The following is a 338-amino-acid chain: Phenylalanine--tRNA ligase alpha subunit (338 aa).

Glu252 is a Mg(2+) binding site.

It belongs to the class-II aminoacyl-tRNA synthetase family. Phe-tRNA synthetase alpha subunit type 1 subfamily. As to quaternary structure, tetramer of two alpha and two beta subunits. It depends on Mg(2+) as a cofactor.

It localises to the cytoplasm. The enzyme catalyses tRNA(Phe) + L-phenylalanine + ATP = L-phenylalanyl-tRNA(Phe) + AMP + diphosphate + H(+). In Pseudomonas syringae pv. syringae (strain B728a), this protein is Phenylalanine--tRNA ligase alpha subunit.